A 411-amino-acid polypeptide reads, in one-letter code: Argininosuccinate synthase (411 aa).

ATP-binding positions include 13 to 21 (AYSGGLDTS) and alanine 40. The L-citrulline site is built by tyrosine 91 and serine 96. Glycine 121 contacts ATP. The L-aspartate site is built by threonine 123, asparagine 127, and aspartate 128. Asparagine 127 lines the L-citrulline pocket. 5 residues coordinate L-citrulline: arginine 131, serine 182, serine 191, glutamate 267, and tyrosine 279.

The protein belongs to the argininosuccinate synthase family. Type 1 subfamily. In terms of assembly, homotetramer.

It localises to the cytoplasm. It carries out the reaction L-citrulline + L-aspartate + ATP = 2-(N(omega)-L-arginino)succinate + AMP + diphosphate + H(+). The protein operates within amino-acid biosynthesis; L-arginine biosynthesis; L-arginine from L-ornithine and carbamoyl phosphate: step 2/3. The protein is Argininosuccinate synthase of Bartonella tribocorum (strain CIP 105476 / IBS 506).